A 733-amino-acid polypeptide reads, in one-letter code: tRNA (guanine(27)-N(2))-dimethyltransferase (733 aa).

Residues 1–18 (MENMAEEELLPLEKEEVE) show a composition bias toward acidic residues. The disordered stretch occupies residues 1-78 (MENMAEEELL…LASAPEEAKS (78 aa)). Thr26 bears the Phosphothreonine mark. Composition is skewed to low complexity over residues 39 to 49 (PDSALDSAPTP) and 57 to 73 (PALA…ASAP). Ser66 is modified (phosphoserine). The Nucleolar localization signal signature appears at 135 to 139 (HKLRR). Residues 184–206 (YHCIICSATITRRTDMLGHVRRH) form a C2H2-type zinc finger. The 462-residue stretch at 227–688 (EILKEADTDV…APLMQFKSIL (462 aa)) folds into the Trm1 methyltransferase domain. Residues Arg260, Asp307, Asp357, and Ala358 each contribute to the S-adenosyl-L-methionine site. Cys488, Cys491, Cys513, and Cys515 together coordinate Zn(2+). Lys585 is covalently cross-linked (Glycyl lysine isopeptide (Lys-Gly) (interchain with G-Cter in SUMO2)). A phosphoserine mark is found at Ser612 and Ser707.

The protein belongs to the class I-like SAM-binding methyltransferase superfamily. Trm1 family. As to expression, widely expressed.

It localises to the nucleus. It is found in the nucleolus. The enzyme catalyses guanosine(27) in tRNA(Tyr) + 2 S-adenosyl-L-methionine = N(2)-dimethylguanosine(27) in tRNA(Tyr) + 2 S-adenosyl-L-homocysteine + 2 H(+). Functionally, specifically dimethylates a single guanine residue at position 27 of tRNA(Tyr) using S-adenosyl-L-methionine as donor of the methyl groups. Dimethylation at position 27 of tRNA(Tyr) is required for efficient translation of tyrosine codons. Also required to maintain 3-(3-amino-3-carboxypropyl)uridine (acp3U) in the D-loop of several cytoplasmic tRNAs. In Homo sapiens (Human), this protein is tRNA (guanine(27)-N(2))-dimethyltransferase.